A 539-amino-acid polypeptide reads, in one-letter code: AT-rich interactive domain-containing protein 3A (539 aa).

Residues 1–190 form a disordered region; it reads MKLQAVMETL…PLSGHPQLQD (190 aa). Residues 55–73 show a composition bias toward low complexity; it reads LKIQRAQAAALAAMRAAAA. Residues 84–100 show a composition bias toward acidic residues; it reads SEEEDGESMASDEEDEK. Basic and acidic residues predominate over residues 101 to 110; that stretch reads ERDGESERYQ. Acidic residues predominate over residues 113–141; sequence ASEEEDLKGKWDEDDFEDEGEDEYEDMEE. The segment covering 161–173 has biased composition (polar residues); it reads HSSQQAFPSQRSQ. An ARID domain is found at 209-301; sequence DPKRKEFLDD…YLYPYECEKR (93 aa). One can recognise an REKLES domain in the interval 404-499; that stretch reads AALEQLREKL…GVLFAQPPTS (96 aa). The interval 405 to 448 is important for nuclear localization; sequence ALEQLREKLESGEPPEKKMALGSEEQQRIIQRTIQHNLLAMTAQ. Residues 450–471 form a homodimerization region; the sequence is PMNIRINSQAEGRQDSAVNLTT. An important for cytoplasmic localization region spans residues 495–502; that stretch reads QPPTSASG. Over residues 497–512 the composition is skewed to polar residues; the sequence is PTSASGTSKGSSNRTG. The segment at 497–539 is disordered; sequence PTSASGTSKGSSNRTGSIGGGSSNSQAAPPSTPSAPNSNNPSP. Positions 519–539 are enriched in low complexity; that stretch reads SNSQAAPPSTPSAPNSNNPSP.

In terms of assembly, homodimer.

Its subcellular location is the nucleus. The protein localises to the cytoplasm. Its function is as follows. Transcription factor required for smad1 and smad2-mediated responses to TGFbeta during mesoderm induction. The polypeptide is AT-rich interactive domain-containing protein 3A (arid3a) (Xenopus laevis (African clawed frog)).